Here is a 74-residue protein sequence, read N- to C-terminus: Conotoxin AbVIH (74 aa).

Positions 1-17 (VLIIAVLFLTACQLTTA) are cleaved as a signal peptide. Positions 18–40 (ETSSRGKQKHRALRSTDKDSRMT) are excised as a propeptide. The interval 19-40 (TSSRGKQKHRALRSTDKDSRMT) is disordered. 3 disulfide bridges follow: Cys43-Cys57, Cys50-Cys61, and Cys56-Cys68.

Belongs to the conotoxin O1 superfamily. Expressed by the venom duct.

Its subcellular location is the secreted. This chain is Conotoxin AbVIH, found in Conus abbreviatus (Abbreviated cone).